The chain runs to 307 residues: Putative serine/threonine-protein phosphatase C22H10.04 (307 aa).

Mn(2+)-binding residues include Asp-51, His-53, Asp-79, and Asn-111. His-112 (proton donor) is an active-site residue. Residues His-161 and His-236 each contribute to the Mn(2+) site.

The protein belongs to the PPP phosphatase family. PP-X subfamily. Requires Mn(2+) as cofactor.

The catalysed reaction is O-phospho-L-seryl-[protein] + H2O = L-seryl-[protein] + phosphate. It carries out the reaction O-phospho-L-threonyl-[protein] + H2O = L-threonyl-[protein] + phosphate. This chain is Putative serine/threonine-protein phosphatase C22H10.04, found in Schizosaccharomyces pombe (strain 972 / ATCC 24843) (Fission yeast).